Consider the following 520-residue polypeptide: DnaJ homolog l(2)tid, mitochondrial (520 aa).

The transit peptide at 1-62 (MMISCKKLFV…RRLHTTRDLL (62 aa)) directs the protein to the mitochondrion. An Omega-N-methylarginine modification is found at Arg-30. The J domain occupies 65–130 (DYYATLGVAK…QKRREYDTYG (66 aa)). N6-acetyllysine is present on Lys-106. The segment at 214–292 (GVNKDVNVNV…CEGKGRTVQR (79 aa)) adopts a CR-type zinc-finger fold. 8 residues coordinate Zn(2+): Cys-227, Cys-230, Cys-244, Cys-247, Cys-266, Cys-269, Cys-280, and Cys-283. Residues 227–234 (CPKCAGTK) form a CXXCXGXG motif; approximate repeat. The stretch at 244–251 (CQYCNGTG) is one CXXCXGXG motif repeat. Residues 266 to 273 (CRYCQGTR) form a CXXCXGXG motif; approximate repeat. The stretch at 280 to 287 (CSECEGKG) is one CXXCXGXG motif repeat. The interval 430–520 (QIHGIANRKD…FISKIKSMFN (91 aa)) is disordered. Positions 446-476 (AGASEEPGAGAAAKASAAAAGSGASKPGPGA) are enriched in low complexity. A compositionally biased stretch (basic and acidic residues) spans 479–495 (SEGKDQWTDNKKTKAKE). A compositionally biased stretch (gly residues) spans 496-511 (GGGSGSGQGDGGGGGF).

Interacts with ptc (via C-terminal cytoplasmic region); the interaction is probably direct. Interacts with hh/hedgehog; the interaction is probably mediated by the hedgehog receptor ptc. In terms of processing, appears to produce proteins of differing size. Predicted to have a molecular mass of 56 kDa (TID56) however proteins of 50 kDa, 47 kDa and 40 kDa have been identified and named TID50, TID47 and TID40. TID50 and TID40 localize to the mitochondria while TID47 localizes to the cytoplasm. TID50 is probably TID56 that has undergone mitochondrial transit peptide processing. TID40 and TID47 may be alternately processed proteins or may be isoforms resulting from alternative splicing. Ubiquitously expressed throughout embryonic development. In larvae, expression is seen in sensory organs, gopplet cells, gonads, imaginal disks, proventriculus, fat body, hematopoietic organ, midgut, Malpighian tubules and ring gland.

Its subcellular location is the cytoplasm. The protein resides in the cytosol. The protein localises to the mitochondrion. It localises to the mitochondrion outer membrane. Functionally, involved in hh/hedgehog signaling. May act as a tumor suppressor in larval imaginal disks. This is DnaJ homolog l(2)tid, mitochondrial from Drosophila melanogaster (Fruit fly).